The chain runs to 211 residues: Glycerol-3-phosphate acyltransferase (211 aa).

5 helical membrane-spanning segments follow: residues 5 to 25 (VILG…TGYL), 55 to 75 (GPGL…ILVA), 85 to 105 (PVPA…AVLA), 126 to 146 (VLLA…LVVL), and 168 to 188 (WFFT…AFVI).

It belongs to the PlsY family. In terms of assembly, probably interacts with PlsX.

The protein resides in the cell inner membrane. It catalyses the reaction an acyl phosphate + sn-glycerol 3-phosphate = a 1-acyl-sn-glycero-3-phosphate + phosphate. The protein operates within lipid metabolism; phospholipid metabolism. Catalyzes the transfer of an acyl group from acyl-phosphate (acyl-PO(4)) to glycerol-3-phosphate (G3P) to form lysophosphatidic acid (LPA). This enzyme utilizes acyl-phosphate as fatty acyl donor, but not acyl-CoA or acyl-ACP. This is Glycerol-3-phosphate acyltransferase from Thermosynechococcus vestitus (strain NIES-2133 / IAM M-273 / BP-1).